We begin with the raw amino-acid sequence, 388 residues long: Omega-hydroxy-beta-dihydromenaquinone-9 sulfotransferase Stf3 (388 aa).

The protein belongs to the Stf3 family.

The catalysed reaction is omega-hydroxy-beta-dihydromenaquinone-9 + 3'-phosphoadenylyl sulfate = omega-sulfo-beta-dihydromenaquinone-9 + adenosine 3',5'-bisphosphate + H(+). In terms of biological role, involved in the biosynthesis of sulfomenaquinone (SMK, initially named S881 on the basis of its mass), which is localized in the outer envelope of M.bovis and negatively regulates its virulence. Catalyzes the transfer of a sulfonate group from 3'-phosphoadenosine-5'-phosphosulfate (PAPS) to omega-hydroxy-beta-dihydromenaquinone-9, generating omega-sulfo-beta-dihydromenaquinone-9 (sulfomenaquinone). The sequence is that of Omega-hydroxy-beta-dihydromenaquinone-9 sulfotransferase Stf3 from Mycobacterium bovis (strain ATCC BAA-935 / AF2122/97).